Reading from the N-terminus, the 296-residue chain is Ribosomal RNA small subunit methyltransferase A (296 aa).

S-adenosyl-L-methionine contacts are provided by N30, L32, G57, E78, D103, and N128.

It belongs to the class I-like SAM-binding methyltransferase superfamily. rRNA adenine N(6)-methyltransferase family. RsmA subfamily.

Its subcellular location is the cytoplasm. The catalysed reaction is adenosine(1518)/adenosine(1519) in 16S rRNA + 4 S-adenosyl-L-methionine = N(6)-dimethyladenosine(1518)/N(6)-dimethyladenosine(1519) in 16S rRNA + 4 S-adenosyl-L-homocysteine + 4 H(+). Its function is as follows. Specifically dimethylates two adjacent adenosines (A1518 and A1519) in the loop of a conserved hairpin near the 3'-end of 16S rRNA in the 30S particle. May play a critical role in biogenesis of 30S subunits. In Staphylococcus haemolyticus (strain JCSC1435), this protein is Ribosomal RNA small subunit methyltransferase A.